We begin with the raw amino-acid sequence, 264 residues long: MKFFLSLKDFKGEKFVLRSELDESSAFLCAISPTCRYVLRDEIPWKRLQRNVTSESLTDELIVDLLCGRSESKHTLQLVVLENLCRIYINYVDPFPLRIAWFELEQQALKDHEHFDVLWECSHSIKDLALASMAQQKNELQKLMAYTEQLQEECKSRERKLIMKFADMIKNARNNEDNEDNHHINYEDESDVGTDEQKQQEGVNSSAVSDTDESAVSDEFMQIKEEFPMKALSASPTADASPESAGEDDSHRRSSHESSETVSE.

The segment covering 173–186 (RNNEDNEDNHHINY) has biased composition (basic and acidic residues). The interval 173–264 (RNNEDNEDNH…SHESSETVSE (92 aa)) is disordered. The span at 200–209 (QEGVNSSAVS) shows a compositional bias: polar residues. Residues 248 to 264 (DDSHRRSSHESSETVSE) show a composition bias toward basic and acidic residues.

The protein belongs to the XRCC4-XLF family. XRCC4 subfamily. Interacts with lig4; the interaction is direct.

Its subcellular location is the nucleus. Functionally, involved in double-strand break repair via non-homologous end joining (NHEJ); the repair of a double-strand break in DNA in which the two broken ends are rejoined with little or no sequence complementarity. The sequence is that of Non-homologous end-joining factor xrc4 from Schizosaccharomyces pombe (strain 972 / ATCC 24843) (Fission yeast).